We begin with the raw amino-acid sequence, 95 residues long: Aspartyl/glutamyl-tRNA(Asn/Gln) amidotransferase subunit C (95 aa).

Belongs to the GatC family. In terms of assembly, heterotrimer of A, B and C subunits.

The enzyme catalyses L-glutamyl-tRNA(Gln) + L-glutamine + ATP + H2O = L-glutaminyl-tRNA(Gln) + L-glutamate + ADP + phosphate + H(+). It carries out the reaction L-aspartyl-tRNA(Asn) + L-glutamine + ATP + H2O = L-asparaginyl-tRNA(Asn) + L-glutamate + ADP + phosphate + 2 H(+). Allows the formation of correctly charged Asn-tRNA(Asn) or Gln-tRNA(Gln) through the transamidation of misacylated Asp-tRNA(Asn) or Glu-tRNA(Gln) in organisms which lack either or both of asparaginyl-tRNA or glutaminyl-tRNA synthetases. The reaction takes place in the presence of glutamine and ATP through an activated phospho-Asp-tRNA(Asn) or phospho-Glu-tRNA(Gln). The polypeptide is Aspartyl/glutamyl-tRNA(Asn/Gln) amidotransferase subunit C (Methylobacterium sp. (strain 4-46)).